We begin with the raw amino-acid sequence, 491 residues long: UDP-N-acetylmuramate--L-alanine ligase (491 aa).

Position 115 to 121 (115 to 121 (GTHGKTT)) interacts with ATP.

This sequence belongs to the MurCDEF family.

The protein localises to the cytoplasm. It catalyses the reaction UDP-N-acetyl-alpha-D-muramate + L-alanine + ATP = UDP-N-acetyl-alpha-D-muramoyl-L-alanine + ADP + phosphate + H(+). It functions in the pathway cell wall biogenesis; peptidoglycan biosynthesis. Cell wall formation. This is UDP-N-acetylmuramate--L-alanine ligase from Parvibaculum lavamentivorans (strain DS-1 / DSM 13023 / NCIMB 13966).